Reading from the N-terminus, the 127-residue chain is MADLAKIVEDLSSLTVLEAAELSKLLEEKWGVSAAAPVAVAAAGGAAGGAAAAAEEEKTEFDVILTDAGANKINVIKEVRAITGLGLKEAKDLVEGAPKAVKEAVSKAEAADLKKKLEDAGAKVDVK.

This sequence belongs to the bacterial ribosomal protein bL12 family. As to quaternary structure, homodimer. Part of the ribosomal stalk of the 50S ribosomal subunit. Forms a multimeric L10(L12)X complex, where L10 forms an elongated spine to which 2 to 4 L12 dimers bind in a sequential fashion. Binds GTP-bound translation factors.

In terms of biological role, forms part of the ribosomal stalk which helps the ribosome interact with GTP-bound translation factors. Is thus essential for accurate translation. The chain is Large ribosomal subunit protein bL12 from Sinorhizobium fredii (strain NBRC 101917 / NGR234).